Reading from the N-terminus, the 165-residue chain is Small ribosomal subunit protein uS5 (165 aa).

Residues 10–73 (LVEKLVAVDR…EAARRNMITV (64 aa)) form the S5 DRBM domain.

The protein belongs to the universal ribosomal protein uS5 family. Part of the 30S ribosomal subunit. Contacts proteins S4 and S8.

In terms of biological role, with S4 and S12 plays an important role in translational accuracy. Functionally, located at the back of the 30S subunit body where it stabilizes the conformation of the head with respect to the body. The polypeptide is Small ribosomal subunit protein uS5 (Acinetobacter baumannii (strain AB307-0294)).